The chain runs to 287 residues: AA9 family lytic polysaccharide monooxygenase D (287 aa).

The signal sequence occupies residues 1-17 (MKLSLLAAAAIAPMVSA). His-18 contributes to the Cu(2+) binding site. A disulfide bond links Cys-67 and Cys-189. His-176 is an O2 binding site. Tyr-186 provides a ligand contact to Cu(2+). N-linked (GlcNAc...) asparagine glycans are attached at residues Asn-220 and Asn-250. The tract at residues 239–287 (TGGSGSSTGSYNESNAEDSNEYPYQKESGTCQSNFYRREHARDFSHRRA) is disordered. Residues 274-287 (YRREHARDFSHRRA) show a composition bias toward basic and acidic residues.

Belongs to the polysaccharide monooxygenase AA9 family. The cofactor is Cu(2+).

It is found in the secreted. The enzyme catalyses [(1-&gt;4)-beta-D-glucosyl]n+m + reduced acceptor + O2 = 4-dehydro-beta-D-glucosyl-[(1-&gt;4)-beta-D-glucosyl]n-1 + [(1-&gt;4)-beta-D-glucosyl]m + acceptor + H2O.. Lytic polysaccharide monooxygenase (LPMO) that depolymerizes crystalline and amorphous polysaccharides via the oxidation of scissile alpha- or beta-(1-4)-glycosidic bonds, yielding C1 oxidation products. Catalysis by LPMOs requires the reduction of the active-site copper from Cu(II) to Cu(I) by a reducing agent and H(2)O(2) or O(2) as a cosubstrate. Active on celluloseas as well as on the hemicellulose xyloglucan. Shows synergy with other hydrolases in degrading sorghum stover. The polypeptide is AA9 family lytic polysaccharide monooxygenase D (Emericella nidulans (strain FGSC A4 / ATCC 38163 / CBS 112.46 / NRRL 194 / M139) (Aspergillus nidulans)).